Consider the following 1227-residue polypeptide: Pesticidal crystal protein Cry1Be (1227 aa).

The protein belongs to the delta endotoxin family.

Its function is as follows. Promotes colloidosmotic lysis by binding to the midgut epithelial cells of many lepidopteran larvae. The chain is Pesticidal crystal protein Cry1Be (cry1Be) from Bacillus thuringiensis.